A 336-amino-acid polypeptide reads, in one-letter code: NADH-quinone oxidoreductase subunit H (336 aa).

8 helical membrane passes run 4 to 24 (YILW…LVVA), 75 to 95 (YLFF…WAVI), 108 to 128 (LGLL…VIAG), 154 to 174 (MGFA…TGII), 181 to 201 (IWHW…IAGI), 233 to 253 (LFFL…SIMF), 272 to 292 (FVPG…MFLW), and 308 to 328 (LGWK…ACMV).

The protein belongs to the complex I subunit 1 family. As to quaternary structure, NDH-1 is composed of 14 different subunits. Subunits NuoA, H, J, K, L, M, N constitute the membrane sector of the complex.

It is found in the cell inner membrane. It carries out the reaction a quinone + NADH + 5 H(+)(in) = a quinol + NAD(+) + 4 H(+)(out). Functionally, NDH-1 shuttles electrons from NADH, via FMN and iron-sulfur (Fe-S) centers, to quinones in the respiratory chain. The immediate electron acceptor for the enzyme in this species is believed to be ubiquinone. Couples the redox reaction to proton translocation (for every two electrons transferred, four hydrogen ions are translocated across the cytoplasmic membrane), and thus conserves the redox energy in a proton gradient. This subunit may bind ubiquinone. The polypeptide is NADH-quinone oxidoreductase subunit H (Francisella tularensis subsp. tularensis (strain FSC 198)).